Reading from the N-terminus, the 1079-residue chain is BRD4-interacting chromatin-remodeling complex-associated protein-like (1079 aa).

Disordered stretches follow at residues 51–79 (NSSN…LPLS) and 509–604 (LHLS…TPGT). Low complexity predominate over residues 68-79 (LGEGPSDGLPLS). Polar residues predominate over residues 544-576 (SSASTAHPSLGSAVQSGSSGSNFTGDQLTQPNR). Residues 590–604 (SSSKSTSTFSNTPGT) show a composition bias toward low complexity. Ser623 bears the Phosphoserine mark. Disordered regions lie at residues 669 to 691 (EKVV…GGQK), 837 to 877 (TQFG…NHDQ), and 917 to 954 (TSEE…TESK). Composition is skewed to basic and acidic residues over residues 918 to 928 (SEEKASRREPL) and 938 to 952 (EGHR…HGTE). Ser980 is subject to Phosphoserine.

Component of the multiprotein chromatin-remodeling complexes SWI/SNF: SWI/SNF-A (BAF), SWI/SNF-B (PBAF) and related complexes. The canonical complex contains a catalytic subunit (either SMARCA4/BRG1/BAF190A or SMARCA2/BRM/BAF190B) and at least SMARCE1, ACTL6A/BAF53, SMARCC1/BAF155, SMARCC2/BAF170, and SMARCB1/SNF5/BAF47. Other subunits specific to each of the complexes may also be present permitting several possible combinations developmentally and tissue specific. Component of the SWI/SNF (GBAF) subcomplex, which includes at least BICRA or BICRAL (mutually exclusive), BRD9, SS18, the core BAF subunits, SMARCA2/BRM, SMARCA4/BRG1/BAF190A, ACTL6A/BAF53, SMARCC1/BAF155, and SMARCD1/BAF60A.

Its function is as follows. Component of SWI/SNF chromatin remodeling subcomplex GBAF that carries out key enzymatic activities, changing chromatin structure by altering DNA-histone contacts within a nucleosome in an ATP-dependent manner. The polypeptide is BRD4-interacting chromatin-remodeling complex-associated protein-like (Homo sapiens (Human)).